A 249-amino-acid chain; its full sequence is Pyridoxine 5'-phosphate synthase (249 aa).

Asn7 contacts 3-amino-2-oxopropyl phosphate. 9–10 contacts 1-deoxy-D-xylulose 5-phosphate; sequence DH. Arg18 lines the 3-amino-2-oxopropyl phosphate pocket. His43 functions as the Proton acceptor in the catalytic mechanism. Positions 45 and 50 each coordinate 1-deoxy-D-xylulose 5-phosphate. Glu70 functions as the Proton acceptor in the catalytic mechanism. Thr100 serves as a coordination point for 1-deoxy-D-xylulose 5-phosphate. His190 functions as the Proton donor in the catalytic mechanism. Residues Gly191 and 212–213 contribute to the 3-amino-2-oxopropyl phosphate site; that span reads GH.

It belongs to the PNP synthase family. As to quaternary structure, homooctamer; tetramer of dimers.

The protein resides in the cytoplasm. The catalysed reaction is 3-amino-2-oxopropyl phosphate + 1-deoxy-D-xylulose 5-phosphate = pyridoxine 5'-phosphate + phosphate + 2 H2O + H(+). It participates in cofactor biosynthesis; pyridoxine 5'-phosphate biosynthesis; pyridoxine 5'-phosphate from D-erythrose 4-phosphate: step 5/5. In terms of biological role, catalyzes the complicated ring closure reaction between the two acyclic compounds 1-deoxy-D-xylulose-5-phosphate (DXP) and 3-amino-2-oxopropyl phosphate (1-amino-acetone-3-phosphate or AAP) to form pyridoxine 5'-phosphate (PNP) and inorganic phosphate. In Synechococcus sp. (strain CC9902), this protein is Pyridoxine 5'-phosphate synthase.